The primary structure comprises 262 residues: Thiamine thiazole synthase (262 aa).

Residues alanine 36, 55-56, glycine 63, valine 127, and 154-156 each bind NAD(+); these read EK and HVD. Aspartate 156 and histidine 171 together coordinate Fe cation. An NAD(+)-binding site is contributed by methionine 224. Arginine 234 contacts glycine.

Belongs to the THI4 family. As to quaternary structure, homooctamer; tetramer of dimers. Fe(2+) serves as cofactor.

The catalysed reaction is hydrogen sulfide + glycine + NAD(+) = ADP-5-ethyl-4-methylthiazole-2-carboxylate + nicotinamide + 3 H2O + H(+). It participates in cofactor biosynthesis; thiamine diphosphate biosynthesis. Functionally, involved in the biosynthesis of the thiazole moiety of thiamine. Catalyzes the conversion of NAD and glycine to adenosine diphosphate 5-(2-hydroxyethyl)-4-methylthiazole-2-carboxylate (ADT), an adenylated thiazole intermediate, using free sulfide as a source of sulfur. This Methanothrix thermoacetophila (strain DSM 6194 / JCM 14653 / NBRC 101360 / PT) (Methanosaeta thermophila) protein is Thiamine thiazole synthase.